Consider the following 577-residue polypeptide: Endopolyphosphatase (577 aa).

Residues 1–2 (MR) lie on the Cytoplasmic side of the membrane. The chain crosses the membrane as a helical; Signal-anchor for type II membrane protein span at residues 3 to 23 (PSVITVAVLFVQSTWASFAFG). Over 24-577 (NPMSMRNKAH…YIGSISDFED (554 aa)) the chain is Vacuolar. Asn-363, Asn-370, Asn-375, and Asn-399 each carry an N-linked (GlcNAc...) asparagine glycan. Positions 430–460 (SDYEIDKKKKKKKKNNKKKKKNKRKNIKPGP) are disordered. Over residues 437–456 (KKKKKKKNNKKKKKNKRKNI) the composition is skewed to basic residues. An N-linked (GlcNAc...) asparagine glycan is attached at Asn-481.

Belongs to the endopolyphosphatase PPN1 family. The cofactor is a divalent metal cation. Post-translationally, processing by proteases in the vacuole may be required for activation.

The protein resides in the vacuole membrane. It carries out the reaction [phosphate](n+1) + n H2O = (n+1) phosphate + n H(+). Functionally, catalyzes the hydrolysis of inorganic polyphosphate (polyP) chains of many hundreds of phosphate residues into shorter lengths. In Schizosaccharomyces pombe (strain 972 / ATCC 24843) (Fission yeast), this protein is Endopolyphosphatase (ppn1).